Reading from the N-terminus, the 94-residue chain is DNA-directed RNA polymerase subunit omega (94 aa).

The protein belongs to the RNA polymerase subunit omega family. The RNAP catalytic core consists of 2 alpha, 1 beta, 1 beta' and 1 omega subunit. When a sigma factor is associated with the core the holoenzyme is formed, which can initiate transcription.

The enzyme catalyses RNA(n) + a ribonucleoside 5'-triphosphate = RNA(n+1) + diphosphate. In terms of biological role, promotes RNA polymerase assembly. Latches the N- and C-terminal regions of the beta' subunit thereby facilitating its interaction with the beta and alpha subunits. The chain is DNA-directed RNA polymerase subunit omega from Shewanella pealeana (strain ATCC 700345 / ANG-SQ1).